The primary structure comprises 211 residues: Large ribosomal subunit protein uL4 (211 aa).

Residues 40-85 (QQAHSRQGTASTLTRSEVRGGGRKPYKQKGTGRARQGSVRTPLRPG) are disordered. Residues 41–54 (QAHSRQGTASTLTR) show a composition bias toward polar residues. Residues 60 to 71 (GGRKPYKQKGTG) show a composition bias toward basic residues.

It belongs to the universal ribosomal protein uL4 family. In terms of assembly, part of the 50S ribosomal subunit.

In terms of biological role, one of the primary rRNA binding proteins, this protein initially binds near the 5'-end of the 23S rRNA. It is important during the early stages of 50S assembly. It makes multiple contacts with different domains of the 23S rRNA in the assembled 50S subunit and ribosome. Its function is as follows. Forms part of the polypeptide exit tunnel. The polypeptide is Large ribosomal subunit protein uL4 (Synechococcus sp. (strain CC9311)).